A 420-amino-acid chain; its full sequence is Protein MucB (420 aa).

The region spanning 2–187 (FALIDVNGMY…LPVAEVWGVG (186 aa)) is the UmuC domain.

Belongs to the DNA polymerase type-Y family.

Its function is as follows. Involved in UV protection and mutation. The protein is Protein MucB (mucB) of Escherichia coli.